A 438-amino-acid polypeptide reads, in one-letter code: Glutamyl-tRNA(Gln) amidotransferase subunit D (438 aa).

The Asparaginase/glutaminase domain occupies 91-421; it reads KNLSILSTGG…SEIYEIMKTN (331 aa). Catalysis depends on residues Thr-101, Thr-177, Asp-178, and Lys-254.

This sequence belongs to the asparaginase 1 family. GatD subfamily. As to quaternary structure, heterodimer of GatD and GatE.

The enzyme catalyses L-glutamyl-tRNA(Gln) + L-glutamine + ATP + H2O = L-glutaminyl-tRNA(Gln) + L-glutamate + ADP + phosphate + H(+). In terms of biological role, allows the formation of correctly charged Gln-tRNA(Gln) through the transamidation of misacylated Glu-tRNA(Gln) in organisms which lack glutaminyl-tRNA synthetase. The reaction takes place in the presence of glutamine and ATP through an activated gamma-phospho-Glu-tRNA(Gln). The GatDE system is specific for glutamate and does not act on aspartate. The sequence is that of Glutamyl-tRNA(Gln) amidotransferase subunit D from Methanosphaera stadtmanae (strain ATCC 43021 / DSM 3091 / JCM 11832 / MCB-3).